The chain runs to 468 residues: 23S rRNA (uracil(1939)-C(5))-methyltransferase RlmD (468 aa).

The region spanning 12 to 70 (SKQLSPKLSLNVTQLDHLGAGMAQHQGKVVFIPQALPGERVSVQLTDQKKSFAKAKLIK) is the TRAM domain. Cys83, Cys89, Cys92, and Cys174 together coordinate [4Fe-4S] cluster. Residues Gln296, Phe325, Asn330, Glu351, Asp378, and Asp398 each contribute to the S-adenosyl-L-methionine site. Cys424 acts as the Nucleophile in catalysis.

The protein belongs to the class I-like SAM-binding methyltransferase superfamily. RNA M5U methyltransferase family. RlmD subfamily.

The enzyme catalyses uridine(1939) in 23S rRNA + S-adenosyl-L-methionine = 5-methyluridine(1939) in 23S rRNA + S-adenosyl-L-homocysteine + H(+). Its function is as follows. Catalyzes the formation of 5-methyl-uridine at position 1939 (m5U1939) in 23S rRNA. This Shewanella denitrificans (strain OS217 / ATCC BAA-1090 / DSM 15013) protein is 23S rRNA (uracil(1939)-C(5))-methyltransferase RlmD.